The following is a 285-amino-acid chain: 4-hydroxybenzoate octaprenyltransferase (285 aa).

9 consecutive transmembrane segments (helical) span residues 19-39 (IGSL…ADGL), 42-62 (WHVL…GCVI), 82-102 (LPSG…LVVC), 104-124 (FLLV…GIVL), 136-156 (YLPQ…AYAA), 166-186 (WLLF…YAMV), 210-230 (IIGL…SQLA), 233-253 (GIYY…QWLI), and 265-285 (FLNN…SVLI).

This sequence belongs to the UbiA prenyltransferase family. Requires Mg(2+) as cofactor.

It localises to the cell inner membrane. The enzyme catalyses all-trans-octaprenyl diphosphate + 4-hydroxybenzoate = 4-hydroxy-3-(all-trans-octaprenyl)benzoate + diphosphate. It participates in cofactor biosynthesis; ubiquinone biosynthesis. Functionally, catalyzes the prenylation of para-hydroxybenzoate (PHB) with an all-trans polyprenyl group. Mediates the second step in the final reaction sequence of ubiquinone-8 (UQ-8) biosynthesis, which is the condensation of the polyisoprenoid side chain with PHB, generating the first membrane-bound Q intermediate 3-octaprenyl-4-hydroxybenzoate. This Aliivibrio fischeri (strain ATCC 700601 / ES114) (Vibrio fischeri) protein is 4-hydroxybenzoate octaprenyltransferase.